Here is a 314-residue protein sequence, read N- to C-terminus: MEGKTSRYQDEAHDSAGSFNEETEGLMSGLHRSTKKRKLSSIVKLATPFLIVSFILNIVQLAYITVRRPECYSLYAKLKEHEITVPFRYATEYSDDEHTHEEKDALWNAIDISEGFVAISNDESDRLGLPRSKTFPWDANKGIYVSHGHHALHCTVLLHAYTYDAHQGKKPLVSYHHIEHCLDLLRQDIMCYANDVMDYTPDHGDNFLTGEGQQRKCRDWNKLSAWVKERSACYKTINITRAGEDHGVAHQLDRYTYCPPGSPYEPLIKAFKDLGRVNTGNLAADGFHELTPEELAAEAQAVAEHNKQILADEG.

Residues Met-1–Asp-14 show a composition bias toward basic and acidic residues. A disordered region spans residues Met-1–Glu-24. 2 consecutive short sequence motifs (HXXHC) follow at residues His-150–Cys-154 and His-177–Cys-181.

The protein belongs to the ustYa family.

It participates in mycotoxin biosynthesis. Its function is as follows. Chlorinase; part of the gene cluster that mediates the biosynthesis of the mycotoxin cyclochlorotine, a hepatotoxic and carcinogenic cyclic chlorinated pentapeptide. Within the pathway, cctP2 catalyzes the formation of isocyclochlorotine via dichlorination of the Pro from the isocyclotine skeleton. The NRPS cctN initially catalyzes the condensation of L-serine (Ser), Pro, L-2-aminobutyrate (2Abu), Ser, and beta-Phe in this order to produce isocyclotine. After the dichlorination of Pro2 catalyzed by cctP2 to produce isocyclochlorotine, the cctO-mediated transacylation of isocyclochlorotine can furnish cyclochlorotine. The subsequent hydroxylation of cyclochlorotine by cctR yields hydroxycyclochlorotine as the final product. CctP1 probably acts as a phenylalanine aminomutase and provides the uncommon building block beta-Phe. Furthermore, 2Abu can be synthesized from threonine by one of the threonine dehydratases and transaminases localized outside of the cluster. The functions of the remaining proteins encoded by the cluster, cctM and cctT, have not been identified yet. This chain is Chlorinase cctP2, found in Talaromyces islandicus (Penicillium islandicum).